Here is a 576-residue protein sequence, read N- to C-terminus: Arginine--tRNA ligase (576 aa).

The short motif at 126–136 is the 'HIGH' region element; it reads ANPTGPMHIGH.

The protein belongs to the class-I aminoacyl-tRNA synthetase family. Monomer.

The protein localises to the cytoplasm. It carries out the reaction tRNA(Arg) + L-arginine + ATP = L-arginyl-tRNA(Arg) + AMP + diphosphate. In Rickettsia africae (strain ESF-5), this protein is Arginine--tRNA ligase.